A 464-amino-acid polypeptide reads, in one-letter code: Mothers against decapentaplegic homolog 5 (464 aa).

The MH1 domain occupies 13-137 (PAVKRLLGWK…YKRVESPVLP (125 aa)). The Zn(2+) site is built by Cys-65, Cys-110, Cys-122, and His-127. Residues 166 to 258 (HMPLNATFPE…LAPQNMPRGD (93 aa)) are disordered. Positions 173–183 (FPESFQQHSGG) are enriched in polar residues. Low complexity predominate over residues 199–216 (ASSGTYPNSPASSGPSSP). Positions 237 to 251 (QDGSQSMETGSSLAP) are enriched in polar residues. The 195-residue stretch at 270–464 (WCSIVYYELN…SPLNPISSVS (195 aa)) folds into the MH2 domain.

It belongs to the dwarfin/SMAD family. In terms of assembly, may form trimers with the co-SMAD SMAD4.

Its subcellular location is the cytoplasm. It localises to the nucleus. Its function is as follows. Involved in ventralization. May mediate Bmp2b signaling during early phases of embryonic dorsal-ventral pattern formation. Required for initiation of Smad1 expression during gastrulation. The sequence is that of Mothers against decapentaplegic homolog 5 (smad5) from Danio rerio (Zebrafish).